The primary structure comprises 914 residues: Eukaryotic translation initiation factor 3 subunit C-like protein (914 aa).

Residues 1–44 (MSRFFTTGSDSESESSLSGEELVTKPVGGNYGKQPLLLSEDEED) are disordered. Residues 8-21 (GSDSESESSLSGEE) show a composition bias toward low complexity. 7 positions are modified to phosphoserine: Ser9, Ser11, Ser13, Ser15, Ser16, Ser18, and Ser39. Lys99 bears the N6-acetyllysine mark. Disordered stretches follow at residues 157–302 (TSYK…GGEW) and 523–543 (QLTP…NEGE). Phosphoserine is present on residues Ser166, Ser178, Ser181, and Ser182. Positions 166–190 (SADEDAEKNEEDSEGSSDEDEDEDG) are enriched in acidic residues. Basic and acidic residues predominate over residues 199 to 216 (KKSEAPSGESRKFLKKMD). Over residues 217-232 (DEDEDSEDSEDDEDWD) the composition is skewed to acidic residues. Residues 261 to 278 (PTTDEDKKAAEKKREDKA) show a composition bias toward basic and acidic residues. The segment covering 291–300 (EEEEEDNEGG) has biased composition (acidic residues). A compositionally biased stretch (polar residues) spans 523–532 (QLTPPEGSSK). Position 525 is a phosphothreonine (Thr525). Position 644 is an N6-acetyllysine (Lys644). The 177-residue stretch at 674-850 (FHLHINLELL…QTVVMHRTEP (177 aa)) folds into the PCI domain. A disordered region spans residues 886–914 (FRDQKDGYRKNEGYMRRGGYRQQQSQTAY). The span at 887-900 (RDQKDGYRKNEGYM) shows a compositional bias: basic and acidic residues. Ser910 is subject to Phosphoserine.

Belongs to the eIF-3 subunit C family. In terms of assembly, component of the eukaryotic translation initiation factor 3 (eIF-3) complex, which is composed of 13 subunits: EIF3A, EIF3B, EIF3C, EIF3D, EIF3E, EIF3F, EIF3G, EIF3H, EIF3I, EIF3J, EIF3K, EIF3L and EIF3M. The eIF-3 complex appears to include 3 stable modules: module A is composed of EIF3A, EIF3B, EIF3G and EIF3I; module B is composed of EIF3F, EIF3H, and EIF3M; and module C is composed of EIF3C, EIF3D, EIF3E, EIF3K and EIF3L. EIF3C of module C binds EIF3B of module A and EIF3H of module B, thereby linking the three modules. EIF3J is a labile subunit that binds to the eIF-3 complex via EIF3B. The eIF-3 complex interacts with RPS6KB1 under conditions of nutrient depletion. Mitogenic stimulation leads to binding and activation of a complex composed of MTOR and RPTOR, leading to phosphorylation and release of RPS6KB1 and binding of EIF4B to eIF-3. Phosphorylated. Phosphorylation is enhanced upon serum stimulation.

It localises to the cytoplasm. Its function is as follows. Component of the eukaryotic translation initiation factor 3 (eIF-3) complex, which is required for several steps in the initiation of protein synthesis. The eIF-3 complex associates with the 40S ribosome and facilitates the recruitment of eIF-1, eIF-1A, eIF-2:GTP:methionyl-tRNAi and eIF-5 to form the 43S pre-initiation complex (43S PIC). The eIF-3 complex stimulates mRNA recruitment to the 43S PIC and scanning of the mRNA for AUG recognition. The eIF-3 complex is also required for disassembly and recycling of post-termination ribosomal complexes and subsequently prevents premature joining of the 40S and 60S ribosomal subunits prior to initiation. The eIF-3 complex specifically targets and initiates translation of a subset of mRNAs involved in cell proliferation, including cell cycling, differentiation and apoptosis, and uses different modes of RNA stem-loop binding to exert either translational activation or repression. The chain is Eukaryotic translation initiation factor 3 subunit C-like protein (EIF3CL) from Homo sapiens (Human).